Reading from the N-terminus, the 60-residue chain is Large ribosomal subunit protein bL32 (60 aa).

Residues 1–23 (MAKHPVPKKKTSKSKRDMRRSHH) show a composition bias toward basic residues. Residues 1–26 (MAKHPVPKKKTSKSKRDMRRSHHALV) are disordered.

It belongs to the bacterial ribosomal protein bL32 family.

The chain is Large ribosomal subunit protein bL32 from Deinococcus geothermalis (strain DSM 11300 / CIP 105573 / AG-3a).